The following is a 456-amino-acid chain: tRNA-2-methylthio-N(6)-dimethylallyladenosine synthase (456 aa).

The region spanning 17–135 (KLYLIQSFGC…LPRMIHQVQE (119 aa)) is the MTTase N-terminal domain. Residues Cys26, Cys62, Cys96, Cys172, Cys176, and Cys179 each coordinate [4Fe-4S] cluster. In terms of domain architecture, Radical SAM core spans 158 to 387 (RKDKLKAWVT…IELQNLISLE (230 aa)). A TRAM domain is found at 390–453 (QREEGRVLEV…PNLLEGEVVP (64 aa)).

Belongs to the methylthiotransferase family. MiaB subfamily. Monomer. Requires [4Fe-4S] cluster as cofactor.

The protein localises to the cytoplasm. It catalyses the reaction N(6)-dimethylallyladenosine(37) in tRNA + (sulfur carrier)-SH + AH2 + 2 S-adenosyl-L-methionine = 2-methylsulfanyl-N(6)-dimethylallyladenosine(37) in tRNA + (sulfur carrier)-H + 5'-deoxyadenosine + L-methionine + A + S-adenosyl-L-homocysteine + 2 H(+). In terms of biological role, catalyzes the methylthiolation of N6-(dimethylallyl)adenosine (i(6)A), leading to the formation of 2-methylthio-N6-(dimethylallyl)adenosine (ms(2)i(6)A) at position 37 in tRNAs that read codons beginning with uridine. This is tRNA-2-methylthio-N(6)-dimethylallyladenosine synthase from Desulforamulus reducens (strain ATCC BAA-1160 / DSM 100696 / MI-1) (Desulfotomaculum reducens).